A 141-amino-acid chain; its full sequence is Putative pre-16S rRNA nuclease (141 aa).

It belongs to the YqgF nuclease family.

It is found in the cytoplasm. Functionally, could be a nuclease involved in processing of the 5'-end of pre-16S rRNA. This is Putative pre-16S rRNA nuclease from Cupriavidus necator (strain ATCC 17699 / DSM 428 / KCTC 22496 / NCIMB 10442 / H16 / Stanier 337) (Ralstonia eutropha).